Here is a 124-residue protein sequence, read N- to C-terminus: Small ribosomal subunit protein uS12 (124 aa).

The residue at position 89 (aspartate 89) is a 3-methylthioaspartic acid.

It belongs to the universal ribosomal protein uS12 family. In terms of assembly, part of the 30S ribosomal subunit. Contacts proteins S8 and S17. May interact with IF1 in the 30S initiation complex.

Functionally, with S4 and S5 plays an important role in translational accuracy. Interacts with and stabilizes bases of the 16S rRNA that are involved in tRNA selection in the A site and with the mRNA backbone. Located at the interface of the 30S and 50S subunits, it traverses the body of the 30S subunit contacting proteins on the other side and probably holding the rRNA structure together. The combined cluster of proteins S8, S12 and S17 appears to hold together the shoulder and platform of the 30S subunit. The sequence is that of Small ribosomal subunit protein uS12 from Nitratiruptor sp. (strain SB155-2).